The sequence spans 444 residues: MKVGIISLGCAKNQVDTEVMQGILENSNYKMTDDYYDADIIIVNTCGFIDDAKEESVDHILEVAQLKETGKLKVLIVAGCLSQRYQESLKEEIPEIDAMIGTDTQDKITEVISSALKGNYISFYDRLNKIDEQLFLRQPYQPGPSAYIKIAEGCHNYCSYCAIPLIRGGYRSRTIEDIKIEANHFIEKGSKELTLIAQDTTNYGSDIYGKFSLDTLLDELATIPGDFWIRVLYAYPTRITDSLIEVINRHEKICSYLDIPLQHIDDDILTSMNRGGNKEQILNLIHNLRKNIPDITLRTSLIVGFPGETDEKYQNLISFMQEIEFDHAGIFKYSDEEDTQAYNFKDKVSEDVKEQRYQEAWEVQKEITRKKNEGLVGTEMRVLIEEALEDEPTTKVGRTEGHAPEVDGAVIIPDCEASSGDFINVEIVQALDYDLIGEMTNEFS.

The MTTase N-terminal domain maps to 1 to 117 (MKVGIISLGC…ITEVISSALK (117 aa)). Residues Cys10, Cys46, Cys80, Cys154, Cys158, and Cys161 each contribute to the [4Fe-4S] cluster site. Positions 140 to 370 (YQPGPSAYIK…WEVQKEITRK (231 aa)) constitute a Radical SAM core domain. Positions 373–441 (EGLVGTEMRV…DYDLIGEMTN (69 aa)) constitute a TRAM domain.

Belongs to the methylthiotransferase family. RimO subfamily. It depends on [4Fe-4S] cluster as a cofactor.

It localises to the cytoplasm. It carries out the reaction L-aspartate(89)-[ribosomal protein uS12]-hydrogen + (sulfur carrier)-SH + AH2 + 2 S-adenosyl-L-methionine = 3-methylsulfanyl-L-aspartate(89)-[ribosomal protein uS12]-hydrogen + (sulfur carrier)-H + 5'-deoxyadenosine + L-methionine + A + S-adenosyl-L-homocysteine + 2 H(+). In terms of biological role, catalyzes the methylthiolation of an aspartic acid residue of ribosomal protein uS12. This is Ribosomal protein uS12 methylthiotransferase RimO from Natranaerobius thermophilus (strain ATCC BAA-1301 / DSM 18059 / JW/NM-WN-LF).